Reading from the N-terminus, the 84-residue chain is UPF0153 protein YeiW (84 aa).

Belongs to the UPF0153 family.

The chain is UPF0153 protein YeiW (yeiW) from Escherichia coli (strain K12).